Consider the following 944-residue polypeptide: Protein translocase subunit SecA (944 aa).

Residues Q77, 95-99, and D484 contribute to the ATP site; that span reads GEGKT. A disordered region spans residues 920–944; it reads EQEKQTRKKKKKKPHEDESSKTKIG. A compositionally biased stretch (basic and acidic residues) spans 933-944; sequence PHEDESSKTKIG.

This sequence belongs to the SecA family. Monomer and homodimer. Part of the essential Sec protein translocation apparatus which comprises SecA, SecYEG and auxiliary proteins SecDF. Other proteins may also be involved.

Its subcellular location is the cell membrane. It localises to the cytoplasm. It carries out the reaction ATP + H2O + cellular proteinSide 1 = ADP + phosphate + cellular proteinSide 2.. In terms of biological role, part of the Sec protein translocase complex. Interacts with the SecYEG preprotein conducting channel. Has a central role in coupling the hydrolysis of ATP to the transfer of proteins into and across the cell membrane, serving as an ATP-driven molecular motor driving the stepwise translocation of polypeptide chains across the membrane. The sequence is that of Protein translocase subunit SecA from Mycoplasma mycoides subsp. mycoides SC (strain CCUG 32753 / NCTC 10114 / PG1).